The chain runs to 104 residues: Integration host factor subunit beta (104 aa).

This sequence belongs to the bacterial histone-like protein family. In terms of assembly, heterodimer of an alpha and a beta chain.

This protein is one of the two subunits of integration host factor, a specific DNA-binding protein that functions in genetic recombination as well as in transcriptional and translational control. This is Integration host factor subunit beta (ihfB) from Xylella fastidiosa (strain 9a5c).